A 243-amino-acid polypeptide reads, in one-letter code: Ubiquinone/menaquinone biosynthesis C-methyltransferase UbiE (243 aa).

S-adenosyl-L-methionine-binding positions include threonine 69, aspartate 90, and 116 to 117 (DA).

Belongs to the class I-like SAM-binding methyltransferase superfamily. MenG/UbiE family.

It catalyses the reaction a 2-demethylmenaquinol + S-adenosyl-L-methionine = a menaquinol + S-adenosyl-L-homocysteine + H(+). The catalysed reaction is a 2-methoxy-6-(all-trans-polyprenyl)benzene-1,4-diol + S-adenosyl-L-methionine = a 5-methoxy-2-methyl-3-(all-trans-polyprenyl)benzene-1,4-diol + S-adenosyl-L-homocysteine + H(+). The protein operates within quinol/quinone metabolism; menaquinone biosynthesis; menaquinol from 1,4-dihydroxy-2-naphthoate: step 2/2. Its pathway is cofactor biosynthesis; ubiquinone biosynthesis. Methyltransferase required for the conversion of demethylmenaquinol (DMKH2) to menaquinol (MKH2) and the conversion of 2-polyprenyl-6-methoxy-1,4-benzoquinol (DDMQH2) to 2-polyprenyl-3-methyl-6-methoxy-1,4-benzoquinol (DMQH2). The polypeptide is Ubiquinone/menaquinone biosynthesis C-methyltransferase UbiE (Burkholderia cenocepacia (strain HI2424)).